The following is a 461-amino-acid chain: Divalent metal cation transporter MntH (461 aa).

11 helical membrane passes run 56 to 76, 89 to 109, 132 to 152, 160 to 180, 193 to 213, 230 to 250, 285 to 305, 322 to 342, 378 to 398, 399 to 419, and 433 to 453; these read AMAF…PGNW, TLLA…SLCA, AMVL…AEVI, LIFG…VFLI, ALVI…LALA, IVTN…TVMP, IALM…AATF, LLAP…ALLC, AIAI…GTGQ, LLIL…FPLV, and SPLW…ALNV.

The protein belongs to the NRAMP family.

Its subcellular location is the cell inner membrane. Functionally, h(+)-stimulated, divalent metal cation uptake system. The sequence is that of Divalent metal cation transporter MntH from Agrobacterium fabrum (strain C58 / ATCC 33970) (Agrobacterium tumefaciens (strain C58)).